Reading from the N-terminus, the 281-residue chain is 2-dehydro-3-deoxyphosphooctonate aldolase (281 aa).

It belongs to the KdsA family.

It is found in the cytoplasm. The enzyme catalyses D-arabinose 5-phosphate + phosphoenolpyruvate + H2O = 3-deoxy-alpha-D-manno-2-octulosonate-8-phosphate + phosphate. The protein operates within carbohydrate biosynthesis; 3-deoxy-D-manno-octulosonate biosynthesis; 3-deoxy-D-manno-octulosonate from D-ribulose 5-phosphate: step 2/3. Its pathway is bacterial outer membrane biogenesis; lipopolysaccharide biosynthesis. In Ectopseudomonas mendocina (strain ymp) (Pseudomonas mendocina), this protein is 2-dehydro-3-deoxyphosphooctonate aldolase.